The chain runs to 245 residues: 1-(5-phosphoribosyl)-5-[(5-phosphoribosylamino)methylideneamino] imidazole-4-carboxamide isomerase (245 aa).

D7 (proton acceptor) is an active-site residue. The active-site Proton donor is the D129.

The protein belongs to the HisA/HisF family.

It is found in the cytoplasm. It carries out the reaction 1-(5-phospho-beta-D-ribosyl)-5-[(5-phospho-beta-D-ribosylamino)methylideneamino]imidazole-4-carboxamide = 5-[(5-phospho-1-deoxy-D-ribulos-1-ylimino)methylamino]-1-(5-phospho-beta-D-ribosyl)imidazole-4-carboxamide. It participates in amino-acid biosynthesis; L-histidine biosynthesis; L-histidine from 5-phospho-alpha-D-ribose 1-diphosphate: step 4/9. This chain is 1-(5-phosphoribosyl)-5-[(5-phosphoribosylamino)methylideneamino] imidazole-4-carboxamide isomerase, found in Escherichia coli (strain 55989 / EAEC).